We begin with the raw amino-acid sequence, 100 residues long: Integration host factor subunit alpha (100 aa).

This sequence belongs to the bacterial histone-like protein family. Heterodimer of an alpha and a beta chain.

Functionally, this protein is one of the two subunits of integration host factor, a specific DNA-binding protein that functions in genetic recombination as well as in transcriptional and translational control. The sequence is that of Integration host factor subunit alpha from Rhizorhabdus wittichii (strain DSM 6014 / CCUG 31198 / JCM 15750 / NBRC 105917 / EY 4224 / RW1) (Sphingomonas wittichii).